A 426-amino-acid chain; its full sequence is 4-hydroxy-3-methylbut-2-en-1-yl diphosphate synthase (flavodoxin) (426 aa).

[4Fe-4S] cluster-binding residues include C320, C323, C366, and E373.

Belongs to the IspG family. [4Fe-4S] cluster is required as a cofactor.

It carries out the reaction (2E)-4-hydroxy-3-methylbut-2-enyl diphosphate + oxidized [flavodoxin] + H2O + 2 H(+) = 2-C-methyl-D-erythritol 2,4-cyclic diphosphate + reduced [flavodoxin]. It functions in the pathway isoprenoid biosynthesis; isopentenyl diphosphate biosynthesis via DXP pathway; isopentenyl diphosphate from 1-deoxy-D-xylulose 5-phosphate: step 5/6. Functionally, converts 2C-methyl-D-erythritol 2,4-cyclodiphosphate (ME-2,4cPP) into 1-hydroxy-2-methyl-2-(E)-butenyl 4-diphosphate. This chain is 4-hydroxy-3-methylbut-2-en-1-yl diphosphate synthase (flavodoxin), found in Wolbachia sp. subsp. Drosophila simulans (strain wRi).